The primary structure comprises 256 residues: Hydroxyacylglutathione hydrolase (256 aa).

The Zn(2+) site is built by His58, His60, Asp62, His63, His116, Asp135, and His173.

Belongs to the metallo-beta-lactamase superfamily. Glyoxalase II family. As to quaternary structure, monomer. It depends on Zn(2+) as a cofactor.

It catalyses the reaction an S-(2-hydroxyacyl)glutathione + H2O = a 2-hydroxy carboxylate + glutathione + H(+). It participates in secondary metabolite metabolism; methylglyoxal degradation; (R)-lactate from methylglyoxal: step 2/2. Functionally, thiolesterase that catalyzes the hydrolysis of S-D-lactoyl-glutathione to form glutathione and D-lactic acid. The chain is Hydroxyacylglutathione hydrolase from Hyphomonas neptunium (strain ATCC 15444).